Consider the following 86-residue polypeptide: UPF0297 protein CA_C1679 (86 aa).

It belongs to the UPF0297 family.

The polypeptide is UPF0297 protein CA_C1679 (Clostridium acetobutylicum (strain ATCC 824 / DSM 792 / JCM 1419 / IAM 19013 / LMG 5710 / NBRC 13948 / NRRL B-527 / VKM B-1787 / 2291 / W)).